A 185-amino-acid polypeptide reads, in one-letter code: Elongation factor P (185 aa).

This sequence belongs to the elongation factor P family.

The protein resides in the cytoplasm. The protein operates within protein biosynthesis; polypeptide chain elongation. In terms of biological role, involved in peptide bond synthesis. Stimulates efficient translation and peptide-bond synthesis on native or reconstituted 70S ribosomes in vitro. Probably functions indirectly by altering the affinity of the ribosome for aminoacyl-tRNA, thus increasing their reactivity as acceptors for peptidyl transferase. This chain is Elongation factor P, found in Burkholderia ambifaria (strain MC40-6).